Consider the following 274-residue polypeptide: Photosystem II extrinsic protein O (274 aa).

The first 28 residues, 1–28 (MRFRPSIVALLSVCFGLLTFLYSGSAFA), serve as a signal peptide directing secretion.

It belongs to the PsbO family. PSII is composed of 1 copy each of membrane proteins PsbA, PsbB, PsbC, PsbD, PsbE, PsbF, PsbH, PsbI, PsbJ, PsbK, PsbL, PsbM, PsbT, PsbX, PsbY, PsbZ, Psb30/Ycf12, peripheral proteins PsbO, CyanoQ (PsbQ), PsbU, PsbV and a large number of cofactors. It forms dimeric complexes. Contacts PsbQ.

It localises to the cellular thylakoid membrane. Functionally, one of the extrinsic, lumenal subunits of photosystem II (PSII), which stabilize and protect the oxygen-evolving complex. PSII is a light-driven water plastoquinone oxidoreductase, using light energy to abstract electrons from H(2)O, generating a proton gradient subsequently used for ATP formation. Required for dimerization of PSII and for binding of PsbQ to PSII. This is Photosystem II extrinsic protein O from Synechocystis sp. (strain ATCC 27184 / PCC 6803 / Kazusa).